The chain runs to 349 residues: Isopentenyl-diphosphate delta-isomerase (349 aa).

Position 6-7 (R6–K7) interacts with substrate. FMN is bound by residues A62 to T64, S93, and N122. Residue Q152 coordinates substrate. A Mg(2+)-binding site is contributed by E153. FMN contacts are provided by residues K184, T214, G258 to G259, and A280 to G281.

This sequence belongs to the IPP isomerase type 2 family. As to quaternary structure, homooctamer. Dimer of tetramers. Requires FMN as cofactor. NADPH is required as a cofactor. The cofactor is Mg(2+).

Its subcellular location is the cytoplasm. The enzyme catalyses isopentenyl diphosphate = dimethylallyl diphosphate. Its function is as follows. Involved in the biosynthesis of isoprenoids. Catalyzes the 1,3-allylic rearrangement of the homoallylic substrate isopentenyl (IPP) to its allylic isomer, dimethylallyl diphosphate (DMAPP). The protein is Isopentenyl-diphosphate delta-isomerase of Bacillus subtilis (strain 168).